A 71-amino-acid chain; its full sequence is MPVIKVRENESFDVALRRFKRSCEKAGILAEVRAREFYEKPTTIRKRENATRAKRHAKRVARENARNTRLY.

The segment at 47–71 (RENATRAKRHAKRVARENARNTRLY) is disordered. The segment covering 60-71 (VARENARNTRLY) has biased composition (basic and acidic residues).

This sequence belongs to the bacterial ribosomal protein bS21 family.

This Actinobacillus succinogenes (strain ATCC 55618 / DSM 22257 / CCUG 43843 / 130Z) protein is Small ribosomal subunit protein bS21.